The primary structure comprises 144 residues: Large ribosomal subunit protein uL15 (144 aa).

The segment at 1–54 (MRLNTIKPGEGSKKTAKRVGRGIGSGLGKTCGRGHKGQKSRSGGFHKVGFEGGQ) is disordered. Gly residues predominate over residues 21 to 31 (RGIGSGLGKTC).

Belongs to the universal ribosomal protein uL15 family. Part of the 50S ribosomal subunit.

Functionally, binds to the 23S rRNA. The polypeptide is Large ribosomal subunit protein uL15 (Dechloromonas aromatica (strain RCB)).